Consider the following 345-residue polypeptide: High mobility group protein 20A (345 aa).

Disordered stretches follow at residues 1–130 (MEST…PFPE) and 166–206 (QKYQ…EKES). Polar residues-rich tracts occupy residues 22-38 (NNQP…SSQA) and 57-67 (LHQSGEQQLGN). A compositionally biased stretch (basic residues) spans 80-94 (ARRGGWNKGRKRKRS). The segment at residues 101-169 (PKAPLTGYVR…RYTKELQKYQ (69 aa)) is a DNA-binding region (HMG box). Positions 112–125 (MNERREQLRTERPD) are enriched in basic and acidic residues. Positions 167–178 (KYQNTDAYQTYS) are enriched in polar residues. Over residues 179–189 (RKAKSRQKGRQ) the composition is skewed to basic residues. A coiled-coil region spans residues 227–285 (SKAREAELRQLRKSNMEFEERNAALQKHVESMRSAVQRLEAELSQEHERNSLLQQHLQS).

It localises to the nucleus. Its function is as follows. Plays a role in neuronal differentiation. The polypeptide is High mobility group protein 20A (hmg20a) (Xenopus laevis (African clawed frog)).